The chain runs to 520 residues: GMP synthase [glutamine-hydrolyzing] (520 aa).

The region spanning 3–200 (AIAIIDFGSQ…FLDIANCKRD (198 aa)) is the Glutamine amidotransferase type-1 domain. C84 (nucleophile) is an active-site residue. Active-site residues include H175 and E177. The GMPS ATP-PPase domain maps to 201-386 (WTMKSFIEEQ…IGLSDEIIFQ (186 aa)). An ATP-binding site is contributed by 228–234 (SGGVDSS).

As to quaternary structure, homodimer.

It catalyses the reaction XMP + L-glutamine + ATP + H2O = GMP + L-glutamate + AMP + diphosphate + 2 H(+). The protein operates within purine metabolism; GMP biosynthesis; GMP from XMP (L-Gln route): step 1/1. Catalyzes the synthesis of GMP from XMP. This Wolbachia pipientis wMel protein is GMP synthase [glutamine-hydrolyzing].